The chain runs to 270 residues: Sorting nexin-11 (270 aa).

The PX domain maps to 16 to 132; that stretch reads VITVRVQDPR…HLFLQSQLSV (117 aa). A 1,2-diacyl-sn-glycero-3-phospho-(1D-myo-inositol-3-phosphate)-binding residues include Arg-59, Lys-85, and Arg-99. The interval 135 to 139 is important for membrane trafficking; the sequence is IEACV. Residues 168 to 177 show a composition bias toward basic and acidic residues; the sequence is SSSHLAKGDQ. The interval 168 to 203 is disordered; sequence SSSHLAKGDQPKSCCFLPRSGRRSSPSPPPSEEKDH.

Belongs to the sorting nexin family. As to quaternary structure, monomer. Interacts with TRPV3; this interaction promotes TRPV3 trafficking from the cell membrane to lysosome for degradation.

The protein resides in the cell membrane. The protein localises to the endosome. It is found in the cytoplasm. In terms of biological role, phosphoinositide-binding protein involved in protein sorting and membrane trafficking in endosomes. Regulates the levels of TRPV3 by promoting its trafficking from the cell membrane to lysosome for degradation. The polypeptide is Sorting nexin-11 (SNX11) (Homo sapiens (Human)).